Here is a 214-residue protein sequence, read N- to C-terminus: Oocyte zinc finger protein XlCOF10 (214 aa).

7 C2H2-type zinc fingers span residues 1 to 23 (FSCSQCDESFVQRSELELHRQLH), 29 to 51 (FTCSECGKCFKRFSLLKEHHRIH), 57 to 79 (FTCDECGKCFTQKSHMTAHQKSH), 85 to 107 (FCCSECGKHFKQNSQLVVHQRTH), 113 to 135 (FTCTESGQWFKLQSYLTEHQKSH), 141 to 163 (FSCSDCGKCFKRHSLFIEHQRIH), and 169 to 191 (FSCSVCEKTFTRRSHLTAHEKCH).

The protein belongs to the krueppel C2H2-type zinc-finger protein family.

Its subcellular location is the nucleus. In terms of biological role, may be involved in transcriptional regulation. This chain is Oocyte zinc finger protein XlCOF10, found in Xenopus laevis (African clawed frog).